The following is a 252-amino-acid chain: Chitooligosaccharide deacetylase (252 aa).

Mg(2+) is bound by residues His61 and His125.

Belongs to the YdjC deacetylase family. ChbG subfamily. In terms of assembly, homodimer. Requires Mg(2+) as cofactor.

It localises to the cytoplasm. The catalysed reaction is N,N'-diacetylchitobiose + H2O = N-acetyl-beta-D-glucosaminyl-(1-&gt;4)-D-glucosamine + acetate. It catalyses the reaction diacetylchitobiose-6'-phosphate + H2O = N'-monoacetylchitobiose-6'-phosphate + acetate. Its pathway is glycan degradation; chitin degradation. Involved in the degradation of chitin. ChbG is essential for growth on the acetylated chitooligosaccharides chitobiose and chitotriose but is dispensable for growth on cellobiose and chitosan dimer, the deacetylated form of chitobiose. Deacetylation of chitobiose-6-P and chitotriose-6-P is necessary for both the activation of the chb promoter by the regulatory protein ChbR and the hydrolysis of phosphorylated beta-glucosides by the phospho-beta-glucosidase ChbF. Catalyzes the removal of only one acetyl group from chitobiose-6-P to yield monoacetylchitobiose-6-P, the inducer of ChbR and the substrate of ChbF. The chain is Chitooligosaccharide deacetylase from Escherichia coli O6:K15:H31 (strain 536 / UPEC).